The sequence spans 89 residues: Conotoxin Bu5 (89 aa).

Positions 1 to 22 are cleaved as a signal peptide; that stretch reads MKLTCVLIVAVLFLTACQLATA. A propeptide spanning residues 23 to 49 is cleaved from the precursor; that stretch reads ENSREEQGYSAVRSSDQIQDSDLKLTK. Intrachain disulfides connect C51-C66, C58-C70, and C65-C79. The residue at position 79 (C79) is a Cysteine amide. The propeptide occupies 80 to 89; it reads GVSIDYYDSR.

The protein belongs to the conotoxin O1 superfamily. As to expression, expressed by the venom duct.

It is found in the secreted. This Conus bullatus (Bubble cone) protein is Conotoxin Bu5.